Reading from the N-terminus, the 64-residue chain is Large ribosomal subunit protein bL35 (64 aa).

The segment covering 1–14 (MKNKTHKGTAKRVK) has biased composition (basic residues). The tract at residues 1–30 (MKNKTHKGTAKRVKVTGSGKLVREQANRRH) is disordered. The span at 21–30 (LVREQANRRH) shows a compositional bias: basic and acidic residues.

This sequence belongs to the bacterial ribosomal protein bL35 family.

This chain is Large ribosomal subunit protein bL35, found in Corynebacterium efficiens (strain DSM 44549 / YS-314 / AJ 12310 / JCM 11189 / NBRC 100395).